A 258-amino-acid polypeptide reads, in one-letter code: Ribosomal RNA small subunit methyltransferase A (258 aa).

Residues His-13, Leu-15, Gly-40, Glu-61, Asp-86, and Asn-106 each coordinate S-adenosyl-L-methionine.

It belongs to the class I-like SAM-binding methyltransferase superfamily. rRNA adenine N(6)-methyltransferase family. RsmA subfamily.

The protein resides in the cytoplasm. It carries out the reaction adenosine(1518)/adenosine(1519) in 16S rRNA + 4 S-adenosyl-L-methionine = N(6)-dimethyladenosine(1518)/N(6)-dimethyladenosine(1519) in 16S rRNA + 4 S-adenosyl-L-homocysteine + 4 H(+). Functionally, specifically dimethylates two adjacent adenosines (A1518 and A1519) in the loop of a conserved hairpin near the 3'-end of 16S rRNA in the 30S particle. May play a critical role in biogenesis of 30S subunits. This is Ribosomal RNA small subunit methyltransferase A from Coxiella burnetii (strain RSA 331 / Henzerling II).